The sequence spans 469 residues: Glutamate--tRNA ligase (469 aa).

The 'HIGH' region signature appears at 11–21 (PSPTGFIHLGN). A compositionally biased stretch (basic and acidic residues) spans 116-131 (ASGEKPRYDGTWRPEP). The tract at residues 116–139 (ASGEKPRYDGTWRPEPGKVLPTPP) is disordered. Positions 243–247 (KMSKR) match the 'KMSKS' region motif. Lys-246 contributes to the ATP binding site.

Belongs to the class-I aminoacyl-tRNA synthetase family. Glutamate--tRNA ligase type 1 subfamily. Monomer.

The protein localises to the cytoplasm. The enzyme catalyses tRNA(Glu) + L-glutamate + ATP = L-glutamyl-tRNA(Glu) + AMP + diphosphate. Catalyzes the attachment of glutamate to tRNA(Glu) in a two-step reaction: glutamate is first activated by ATP to form Glu-AMP and then transferred to the acceptor end of tRNA(Glu). This is Glutamate--tRNA ligase from Paraburkholderia phymatum (strain DSM 17167 / CIP 108236 / LMG 21445 / STM815) (Burkholderia phymatum).